An 80-amino-acid polypeptide reads, in one-letter code: uncharacterized protein (80 aa).

The helical transmembrane segment at 10-29 threads the bilayer; sequence FVAREYPLVVVPFIYFVLFL.

It localises to the membrane. This is an uncharacterized protein from Saccharomyces cerevisiae (strain ATCC 204508 / S288c) (Baker's yeast).